The sequence spans 112 residues: MSGKTVTRADLAESVFRKVGLSRTESAELVETVIDEICNAIVRGESVKLSSFATFQVRDKNERIGRNPKTGEEVPISPRRVMTFKASNVLKQRVLKAHLSRRAKQKQTGTAS.

It belongs to the bacterial histone-like protein family. Heterodimer of an alpha and a beta chain.

This protein is one of the two subunits of integration host factor, a specific DNA-binding protein that functions in genetic recombination as well as in transcriptional and translational control. The protein is Integration host factor subunit alpha of Sinorhizobium fredii (strain NBRC 101917 / NGR234).